A 107-amino-acid polypeptide reads, in one-letter code: Transcriptional regulator Rv3488 (107 aa).

Cd(2+) is bound by residues histidine 16, glutamate 30, histidine 34, and histidine 101.

In terms of assembly, homodimer.

Functionally, may have transcription regulation and metal-detoxifying functions through which it may enhance intracellular survival of mycobacteria. Binds to its own promoter region and to the Rv1999c promoter region. It displays strong affinity for cadmium ions, but can also bind zinc, manganese and nickel. Expression increases the intracellular survival of recombinant M.smegmatis in murine macrophage cell line and increases its tolerance to cadmium ions. The chain is Transcriptional regulator Rv3488 from Mycobacterium tuberculosis (strain ATCC 25618 / H37Rv).